The chain runs to 702 residues: Dynein intermediate chain 2, ciliary (702 aa).

The segment covering 1–11 has biased composition (low complexity); it reads MPVKSTKTKGG. Disordered regions lie at residues 1 to 64, 128 to 226, and 243 to 272; these read MPVK…IKPD, DEAR…FSST, and QEKAKEKKAAPSKKDDDKSKKKLTALETQS. 2 stretches are compositionally biased toward basic and acidic residues: residues 36-52 and 152-176; these read GKKDDDDATEAGEHGGE and GEEKKEEDGEQKTEEPKEGEKRDEE. The span at 189–206 shows a compositional bias: polar residues; it reads KLTNQFNFSERASQTYNN. The segment covering 243-261 has biased composition (basic and acidic residues); sequence QEKAKEKKAAPSKKDDDKS. WD repeat units follow at residues 380–420, 429–472, 490–533, 537–577, 580–620, and 628–667; these read PTDS…ANPV, KHTD…LTYT, TQLT…QFLD, AHHM…GPMF, DLGS…YEPI, and KKKTKLTHITFNPNFPIVLVGDDRGYVSSLKLSPNLRKVP.

It belongs to the dynein intermediate chain family. In terms of assembly, consists of at least two heavy chains (alpha and beta), three intermediate chains and several light chains.

Its subcellular location is the cytoplasm. It is found in the cytoskeleton. The protein resides in the cilium axoneme. In terms of biological role, microtubule-binding protein that may be involved in dynein outer arm assembly on the axoneme. This is Dynein intermediate chain 2, ciliary from Heliocidaris crassispina (Sea urchin).